The sequence spans 356 residues: Phosphate acyltransferase (356 aa).

Belongs to the PlsX family. Homodimer. Probably interacts with PlsY.

The protein localises to the cytoplasm. The enzyme catalyses a fatty acyl-[ACP] + phosphate = an acyl phosphate + holo-[ACP]. It participates in lipid metabolism; phospholipid metabolism. Its function is as follows. Catalyzes the reversible formation of acyl-phosphate (acyl-PO(4)) from acyl-[acyl-carrier-protein] (acyl-ACP). This enzyme utilizes acyl-ACP as fatty acyl donor, but not acyl-CoA. This Shigella boydii serotype 4 (strain Sb227) protein is Phosphate acyltransferase.